The chain runs to 566 residues: Mannitol 2-dehydrogenase (566 aa).

106 to 117 (IVHVGVGGFHRA) contributes to the NAD(+) binding site.

It belongs to the mannitol dehydrogenase family. As to quaternary structure, monomer.

It catalyses the reaction D-mannitol + NAD(+) = D-fructose + NADH + H(+). Functionally, catalyzes the NAD(H)-dependent interconversion of D-fructose and D-mannitol in the mannitol metabolic pathway. The chain is Mannitol 2-dehydrogenase from Pyrenophora tritici-repentis (strain Pt-1C-BFP) (Wheat tan spot fungus).